Reading from the N-terminus, the 273-residue chain is Putative phosphoenolpyruvate synthase regulatory protein (273 aa).

153 to 160 (GVSRCGKT) provides a ligand contact to ADP.

It belongs to the pyruvate, phosphate/water dikinase regulatory protein family. PSRP subfamily.

The catalysed reaction is [pyruvate, water dikinase] + ADP = [pyruvate, water dikinase]-phosphate + AMP + H(+). It catalyses the reaction [pyruvate, water dikinase]-phosphate + phosphate + H(+) = [pyruvate, water dikinase] + diphosphate. Bifunctional serine/threonine kinase and phosphorylase involved in the regulation of the phosphoenolpyruvate synthase (PEPS) by catalyzing its phosphorylation/dephosphorylation. The sequence is that of Putative phosphoenolpyruvate synthase regulatory protein from Sodalis glossinidius (strain morsitans).